Here is a 481-residue protein sequence, read N- to C-terminus: Wax ester synthase/diacylglycerol acyltransferase 1 (481 aa).

At 1–185 (MKAEKVMERE…TTATKKPADS (185 aa)) the chain is on the cytoplasmic side. Histidine 147 acts as the Proton acceptor in catalysis. A helical membrane pass occupies residues 186 to 206 (MAWWLFVGFWFMIRVTFTTIV). Topologically, residues 207 to 481 (EFSKLMLTVC…QGEIFHKTEV (275 aa)) are lumenal.

This sequence in the N-terminal section; belongs to the long-chain O-acyltransferase family. As to expression, expressed in flowers, siliques, top parts of stems, and leaves. Not found in roots, seeds and young seedlings.

Its subcellular location is the cell membrane. It localises to the endoplasmic reticulum membrane. It catalyses the reaction a long chain fatty alcohol + a fatty acyl-CoA = a wax ester + CoA. It carries out the reaction an acyl-CoA + a 1,2-diacyl-sn-glycerol = a triacyl-sn-glycerol + CoA. The protein operates within glycerolipid metabolism; triacylglycerol biosynthesis. It functions in the pathway lipid metabolism. Functionally, bifunctional wax ester synthase/diacylglycerol acyltransferase. Involved in cuticular wax biosynthesis. Required to reduce leaf water loss, especially during drought. The protein is Wax ester synthase/diacylglycerol acyltransferase 1 of Arabidopsis thaliana (Mouse-ear cress).